Here is a 342-residue protein sequence, read N- to C-terminus: Anthranilate phosphoribosyltransferase (342 aa).

Residues G90, G93–S94, T98, N100–T103, K118–S126, and S130 contribute to the 5-phospho-alpha-D-ribose 1-diphosphate site. Residue G90 coordinates anthranilate. S102 is a binding site for Mg(2+). An anthranilate-binding site is contributed by N121. R176 contacts anthranilate. Positions 235 and 236 each coordinate Mg(2+).

Belongs to the anthranilate phosphoribosyltransferase family. As to quaternary structure, homodimer. Mg(2+) is required as a cofactor.

The enzyme catalyses N-(5-phospho-beta-D-ribosyl)anthranilate + diphosphate = 5-phospho-alpha-D-ribose 1-diphosphate + anthranilate. It participates in amino-acid biosynthesis; L-tryptophan biosynthesis; L-tryptophan from chorismate: step 2/5. In terms of biological role, catalyzes the transfer of the phosphoribosyl group of 5-phosphorylribose-1-pyrophosphate (PRPP) to anthranilate to yield N-(5'-phosphoribosyl)-anthranilate (PRA). The chain is Anthranilate phosphoribosyltransferase from Rhodopirellula baltica (strain DSM 10527 / NCIMB 13988 / SH1).